The following is a 348-amino-acid chain: Protein RecA (348 aa).

65–72 (GPESSGKT) serves as a coordination point for ATP.

It belongs to the RecA family.

It localises to the cytoplasm. Can catalyze the hydrolysis of ATP in the presence of single-stranded DNA, the ATP-dependent uptake of single-stranded DNA by duplex DNA, and the ATP-dependent hybridization of homologous single-stranded DNAs. It interacts with LexA causing its activation and leading to its autocatalytic cleavage. In Enterococcus gallinarum, this protein is Protein RecA.